Reading from the N-terminus, the 449-residue chain is tRNA-2-methylthio-N(6)-dimethylallyladenosine synthase (449 aa).

The 118-residue stretch at 2–119 folds into the MTTase N-terminal domain; that stretch reads KGLFIRTYGC…LPEMIARASR (118 aa). The [4Fe-4S] cluster site is built by C11, C47, C82, C157, C161, and C164. Residues 143-378 enclose the Radical SAM core domain; that stretch reads EADGPAAFVS…QALLREQQTE (236 aa). A TRAM domain is found at 381-443; that stretch reads ASQIGKTLPV…LNSLTGELVR (63 aa).

This sequence belongs to the methylthiotransferase family. MiaB subfamily. In terms of assembly, monomer. It depends on [4Fe-4S] cluster as a cofactor.

It is found in the cytoplasm. It carries out the reaction N(6)-dimethylallyladenosine(37) in tRNA + (sulfur carrier)-SH + AH2 + 2 S-adenosyl-L-methionine = 2-methylsulfanyl-N(6)-dimethylallyladenosine(37) in tRNA + (sulfur carrier)-H + 5'-deoxyadenosine + L-methionine + A + S-adenosyl-L-homocysteine + 2 H(+). Catalyzes the methylthiolation of N6-(dimethylallyl)adenosine (i(6)A), leading to the formation of 2-methylthio-N6-(dimethylallyl)adenosine (ms(2)i(6)A) at position 37 in tRNAs that read codons beginning with uridine. This Hyphomonas neptunium (strain ATCC 15444) protein is tRNA-2-methylthio-N(6)-dimethylallyladenosine synthase.